Consider the following 412-residue polypeptide: UDP-galactose transporter homolog 1 (412 aa).

Residues 3–23 (VLRLAVCISGVYAAFLLWAIA) traverse the membrane as a helical segment. The tract at residues 31–51 (FPSVHPHPHQQPHSPSDPPPG) is disordered. 4 helical membrane passes run 58–78 (LFLNFAQALASSLSALCYLSF), 139–159 (LLALLVQVSVFQTIASPIGFL), 197–217 (YIVVALVTVGISMFMLFAETS), and 222–242 (GGSDSMWGLVLLLVNLLIDGL). Asn244 carries N-linked (GlcNAc...) asparagine glycosylation. Helical transmembrane passes span 262 to 282 (MMFTMALTTQIILLPLLVLPL), 325 to 345 (SALAPLFAYALLGGLGQLFIF), 355 to 375 (TLVMVTVTRKLFTMLLSVVVF), and 379 to 399 (LTKGQWLGVGVVFAGIGVEAG).

This sequence belongs to the nucleotide-sugar transporter family. SLC35B subfamily.

Its subcellular location is the endoplasmic reticulum membrane. May be involved in specific transport of UDP-Gal from the cytosol to the Golgi lumen. Involved in the maintenance of optimal conditions for the folding of secretory pathway proteins in the endoplasmic reticulum. The chain is UDP-galactose transporter homolog 1 (HUT1-A) from Cryptococcus neoformans var. neoformans serotype D (strain JEC21 / ATCC MYA-565) (Filobasidiella neoformans).